Reading from the N-terminus, the 536-residue chain is MTFTSNLPSSSEQSISPPASSFSSSTDTLKDIDIPHNGADLSTYSKFLALYCRSDKCDDFYSLEEKQNCKFGDQWLDFINTIHNLDFSESEVSGRVSERILPASLANKFTNNLGVAIKISEYTRDDERQIRGCVTTVENENSFNNWFVYHILDQSQLSLSEHPIVTKEVKYHELFADFFEKNLKNTIVNDQWNFGGRDYFIERSRYFTDRYLRIECILPAFPCKSSNEQKVYGSVPDKGEELALKRLIKATQDLVKIYPPGMKIWIVSDGHVFSDCIGVDDDVVSTYTTKLHELYKRVAIPGVDAIGFCGLNDLFFSGAASKVFDPKWVSDVEVAHYTGTQICPKSDLSRQILMKGCDTDAGRLRKQIAIEGHPRLHLYRGFSRFMMEDLSLLEHFQSYSRKKFKKIISMIAFNMIKRNDAYSNLVELIFPHHLRISIHAHTNSGPKFGIKVISNEQCSIVSSLEDLDEPKFEDFLHIPTPWHNCVVKVEDEKEKYFLTKSKVVKEALEKGMYDGVWKDTRFDIGEGGHFVIKKIS.

Residues M1–S23 are disordered.

In terms of biological role, involved in spore wall maturation. Catalyzes a two step reaction that leads to the LL-dityrosine containing precursor of the spore wall. The protein is Spore wall maturation protein DIT1 (DIT1) of Saccharomyces cerevisiae (strain ATCC 204508 / S288c) (Baker's yeast).